A 342-amino-acid polypeptide reads, in one-letter code: Methyltransferase ungE' (342 aa).

It belongs to the methyltransferase superfamily.

Its pathway is secondary metabolite biosynthesis. Methyltransferase; part of the gene cluster that mediates the biosynthesis of the unguisins, gamma-aminobutyric acid (GABA)-containing fungal cyclic heptapeptides with the amino acid sequence cyclo-(D-Ala1-D-Val2-L-Leu3-beta-MePhe4-D-Ala5-D-Trp6-GABA7) for unguisin H and cyclo-(D-Ala1-D-Ala2-L-Leu3-beta-MePhe4-D-Ala5-D-Trp6-GABA7) for unguisin I. Within the pathway, the methyltransferase ungE' is probably involved in the synthesis of the (2R,3R)-beta-methylphenylalanine residue incorporated by the module 4 of the nonribosomal peptide synthetase (NRPS) ungA'. The alanine racemase ungC' catalyzes the interconversion of L-alanine and D-alanine, providing the D-alanine which is accepted by the first adenylation domain of ungA'. UngA' is the main enzyme within the cluster which condenses the 7 residues using its respective 7 modules. The terminal condensation domain (Ct) is involved in cyclization with D-alanine and thereby releasing of unguisins H and I. Finally, the hydrolase ungD' catalyzes the hydrolysis between the D-tryptophan and GABA residues of unguisins H and I to produce the corresponding linear peptides. This Aspergillus campestris (strain IBT 28561) protein is Methyltransferase ungE'.